The sequence spans 250 residues: Probable transcriptional regulatory protein Ppha_0657 (250 aa).

Belongs to the TACO1 family.

It localises to the cytoplasm. The protein is Probable transcriptional regulatory protein Ppha_0657 of Pelodictyon phaeoclathratiforme (strain DSM 5477 / BU-1).